The following is a 310-amino-acid chain: Vomeronasal type-1 receptor 47 (310 aa).

The Extracellular portion of the chain corresponds to 1–16; the sequence is MNENSRLHTHSNIRNT. The helical transmembrane segment at 17–37 threads the bilayer; that stretch reads FFSEIGIGISGNSFLLLFHII. The Cytoplasmic segment spans residues 38-49; that stretch reads KFFRGHRPRLTD. A helical transmembrane segment spans residues 50–70; the sequence is LPIGLLSLIHLLMLLVAAVIA. At 71–91 the chain is on the extracellular side; it reads TDIFISWRGWNDIICKFLVYL. Cysteine 85 and cysteine 172 are joined by a disulfide. A helical membrane pass occupies residues 92 to 114; it reads YRSLRGLSLCTTSMLSVLQAIIL. Over 115–131 the chain is Cytoplasmic; it reads SPRSYCLAKFKRKSSHN. The helical transmembrane segment at 132–152 threads the bilayer; it reads ISCAIIFLSVLYMSISSHLFI. Residues 153-193 lie on the Extracellular side of the membrane; that stretch reads SITATLNLTMNNFLYVSQSCSLLPLSYLMQSMYSTLLVLRE. N-linked (GlcNAc...) asparagine glycosylation occurs at asparagine 159. Residues 194-214 form a helical membrane-spanning segment; it reads VFLIGLMVLSTSYMVALLCMH. The Cytoplasmic portion of the chain corresponds to 215-238; the sequence is RKQAQNLQGTSLSLKTAPEQRATQ. A helical membrane pass occupies residues 239 to 259; the sequence is TILMLMTFFVLMSIFDSIVSS. Over 260–269 the chain is Extracellular; that stretch reads SRAMFLDDST. A helical membrane pass occupies residues 270–290; the sequence is CYSIYIFVMHIYATVSPFVFM. Topologically, residues 291–310 are cytoplasmic; sequence STEKHLVNFFRSMCEWIINM.

It belongs to the G-protein coupled receptor 1 family.

Its subcellular location is the cell membrane. Functionally, putative pheromone receptor implicated in the regulation of social and reproductive behavior. The protein is Vomeronasal type-1 receptor 47 (Vmn1r47) of Mus musculus (Mouse).